Here is a 119-residue protein sequence, read N- to C-terminus: Ribosome-binding factor A (119 aa).

This sequence belongs to the RbfA family. As to quaternary structure, monomer. Binds 30S ribosomal subunits, but not 50S ribosomal subunits or 70S ribosomes.

Its subcellular location is the cytoplasm. One of several proteins that assist in the late maturation steps of the functional core of the 30S ribosomal subunit. Associates with free 30S ribosomal subunits (but not with 30S subunits that are part of 70S ribosomes or polysomes). Required for efficient processing of 16S rRNA. May interact with the 5'-terminal helix region of 16S rRNA. This is Ribosome-binding factor A from Chlorobium phaeovibrioides (strain DSM 265 / 1930) (Prosthecochloris vibrioformis (strain DSM 265)).